Consider the following 85-residue polypeptide: MGNLISTFLSSSKGNSTAQITDCSIWCPRPGQHISIRTFRELNRAPMSNPTSRKTGTVSNGDCSRLTEEVLEADSRHQTTQLPRH.

G2 is lipidated: N-myristoyl glycine; by host. Positions 44 to 63 (RAPMSNPTSRKTGTVSNGDC) are disordered. Polar residues predominate over residues 46–62 (PMSNPTSRKTGTVSNGD).

This sequence belongs to the geminiviridae protein AC4/C4 family.

It localises to the host cell membrane. In terms of biological role, pathogenicity determinant. May act as a suppressor of RNA-mediated gene silencing, also known as post-transcriptional gene silencing (PTGS), a mechanism of plant viral defense that limits the accumulation of viral RNAs. This Potato yellow mosaic virus (isolate Venezuela) (PYMV) protein is Protein AC4.